Here is a 612-residue protein sequence, read N- to C-terminus: Isocitrate dehydrogenase kinase/phosphatase (612 aa).

ATP-binding positions include 327–333 (APGIKGL) and Lys348. Asp383 is an active-site residue. The disordered stretch occupies residues 593–612 (AGAASNEQDAPDAGRSVRAA).

It belongs to the AceK family.

Its subcellular location is the cytoplasm. The catalysed reaction is L-seryl-[isocitrate dehydrogenase] + ATP = O-phospho-L-seryl-[isocitrate dehydrogenase] + ADP + H(+). In terms of biological role, bifunctional enzyme which can phosphorylate or dephosphorylate isocitrate dehydrogenase (IDH) on a specific serine residue. This is a regulatory mechanism which enables bacteria to bypass the Krebs cycle via the glyoxylate shunt in response to the source of carbon. When bacteria are grown on glucose, IDH is fully active and unphosphorylated, but when grown on acetate or ethanol, the activity of IDH declines drastically concomitant with its phosphorylation. The chain is Isocitrate dehydrogenase kinase/phosphatase from Paraburkholderia xenovorans (strain LB400).